The sequence spans 51 residues: Sperm protamine P1 (51 aa).

The protein belongs to the protamine P1 family. Testis.

It is found in the nucleus. It localises to the chromosome. Its function is as follows. Protamines substitute for histones in the chromatin of sperm during the haploid phase of spermatogenesis. They compact sperm DNA into a highly condensed, stable and inactive complex. This chain is Sperm protamine P1 (PRM1), found in Trachypithecus cristatus (Silvered leaf-monkey).